The following is a 298-amino-acid chain: tRNA U34 carboxymethyltransferase (298 aa).

Carboxy-S-adenosyl-L-methionine-binding positions include lysine 69, tryptophan 83, lysine 88, glycine 107, 129-131 (DPS), 156-157 (VE), tyrosine 176, and arginine 291.

The protein belongs to the class I-like SAM-binding methyltransferase superfamily. CmoB family. Homotetramer.

The enzyme catalyses carboxy-S-adenosyl-L-methionine + 5-hydroxyuridine(34) in tRNA = 5-carboxymethoxyuridine(34) in tRNA + S-adenosyl-L-homocysteine + H(+). Functionally, catalyzes carboxymethyl transfer from carboxy-S-adenosyl-L-methionine (Cx-SAM) to 5-hydroxyuridine (ho5U) to form 5-carboxymethoxyuridine (cmo5U) at position 34 in tRNAs. The polypeptide is tRNA U34 carboxymethyltransferase (Campylobacter curvus (strain 525.92)).